The sequence spans 163 residues: Jun dimerization protein 2 (163 aa).

Disordered stretches follow at residues 1–20 and 58–89; these read MMPGQIPDPSVTTGSLPGLG and GKRPQPVKSELDEEEERRKRRREKNKVAAARC. A Glycyl lysine isopeptide (Lys-Gly) (interchain with G-Cter in SUMO2) cross-link involves residue lysine 65. In terms of domain architecture, bZIP spans 72–135; sequence EERRKRRREK…QQLILMLNRH (64 aa). Residues 74–96 form a basic motif region; sequence RRKRRREKNKVAAARCRNKKKER. The interval 100 to 128 is leucine-zipper; that stretch reads LQRESERLELMNAELKTQIEELKQERQQL. Threonine 148 is modified (phosphothreonine; by MAPK8).

Belongs to the bZIP family. ATF subfamily. In terms of assembly, forms a homodimer or heterodimer with JUN, JUNB, JUND, CEBPG and ATF2 thereby inhibiting transactivation by JUN, ATF2 and CEBPG. Binds multiple DNA elements such as cAMP-response element (CRE) and TPA response element (TRE) either as homodimer or heterodimer. Interacts with IRF2BP1. Phosphorylation of Thr-148 by MAPK8 in response to different stress conditions such as, UV irradiation, oxidatives stress and anisomycin treatments. In terms of processing, polyubiquitinated; probably by IRF2BP1.

The protein resides in the nucleus. In terms of biological role, component of the AP-1 transcription factor that represses transactivation mediated by the Jun family of proteins. Involved in a variety of transcriptional responses associated with AP-1 such as UV-induced apoptosis, cell differentiation, tumorigenesis and antitumogeneris. Can also function as a repressor by recruiting histone deacetylase 3/HDAC3 to the promoter region of JUN. May control transcription via direct regulation of the modification of histones and the assembly of chromatin. The chain is Jun dimerization protein 2 (JDP2) from Homo sapiens (Human).